The primary structure comprises 189 residues: Thymidine kinase (189 aa).

ATP is bound by residues glycine 9–serine 16 and aspartate 85–glutamine 88. Catalysis depends on glutamate 86, which acts as the Proton acceptor. 4 residues coordinate Zn(2+): cysteine 143, cysteine 146, cysteine 180, and histidine 183.

The protein belongs to the thymidine kinase family. As to quaternary structure, homotetramer.

It localises to the cytoplasm. The enzyme catalyses thymidine + ATP = dTMP + ADP + H(+). This Lactococcus lactis subsp. lactis (strain IL1403) (Streptococcus lactis) protein is Thymidine kinase.